Reading from the N-terminus, the 499-residue chain is Probable inactive receptor-like protein kinase At3g56050 (499 aa).

The N-terminal stretch at 1–31 (MSNNWKSVRLRLQNRTLVFLLVILSFGSCYS) is a signal peptide. An N-linked (GlcNAc...) asparagine glycan is attached at Asn-14. The Extracellular segment spans residues 32–146 (LKSQGDGFLE…SKTSSNSTIP (115 aa)). Positions 80–121 (RDRPVARATPPSSSVSTRPDAKRSSTLPPPQKSPPAQHVSAP) are disordered. Asn-142 carries an N-linked (GlcNAc...) asparagine glycan. The chain crosses the membrane as a helical span at residues 147–167 (IVAGCIAGAVFILLLATGVFF). Over 168-499 (FKSKAGKSVN…WAELEVLSTA (332 aa)) the chain is Cytoplasmic. A Protein kinase domain is found at 208-474 (EDFSNVIGSC…EVTGRLREIT (267 aa)).

It is found in the cell membrane. This is Probable inactive receptor-like protein kinase At3g56050 from Arabidopsis thaliana (Mouse-ear cress).